The following is a 281-amino-acid chain: 3-deoxy-manno-octulosonate cytidylyltransferase (281 aa).

It belongs to the KdsB family.

The protein localises to the cytoplasm. The catalysed reaction is 3-deoxy-alpha-D-manno-oct-2-ulosonate + CTP = CMP-3-deoxy-beta-D-manno-octulosonate + diphosphate. Its pathway is nucleotide-sugar biosynthesis; CMP-3-deoxy-D-manno-octulosonate biosynthesis; CMP-3-deoxy-D-manno-octulosonate from 3-deoxy-D-manno-octulosonate and CTP: step 1/1. It participates in bacterial outer membrane biogenesis; lipopolysaccharide biosynthesis. Activates KDO (a required 8-carbon sugar) for incorporation into bacterial lipopolysaccharide in Gram-negative bacteria. This chain is 3-deoxy-manno-octulosonate cytidylyltransferase, found in Xanthomonas campestris pv. campestris (strain B100).